We begin with the raw amino-acid sequence, 722 residues long: Probable glycerol-3-phosphate dehydrogenase, mitochondrial (722 aa).

The N-terminal 43 residues, Met1 to Val43, are a transit peptide targeting the mitochondrion. Asp76 to Glu104 contacts FAD. EF-hand domains follow at residues Glu624–Lys659 and Ile660–Gly695. The Ca(2+) site is built by Asp673, Asn675, Asn677, Glu679, and Glu684.

The protein belongs to the FAD-dependent glycerol-3-phosphate dehydrogenase family. Requires FAD as cofactor.

Its subcellular location is the mitochondrion. It carries out the reaction a quinone + sn-glycerol 3-phosphate = dihydroxyacetone phosphate + a quinol. Its pathway is polyol metabolism; glycerol degradation via glycerol kinase pathway; glycerone phosphate from sn-glycerol 3-phosphate (anaerobic route): step 1/1. Its activity is regulated as follows. Calcium-binding enhances the activity of the enzyme. The polypeptide is Probable glycerol-3-phosphate dehydrogenase, mitochondrial (Caenorhabditis elegans).